Consider the following 200-residue polypeptide: Blue fluorescence protein (200 aa).

2 Lumazine-binding repeats span residues 1–111 (MFKG…TGGR) and 112–200 (SLSG…AGNW).

Monomer.

The protein resides in the cytoplasm. Its function is as follows. Blue fluorescence protein (BFP) that can bind 6,7-dimethyl-8-ribityllumazine, riboflavin, and 6-methyl-7-oxo-8-ribityllumazine as a bound fluorophore. Has no riboflavin-synthase activity. The chain is Blue fluorescence protein from Aliivibrio fischeri (Vibrio fischeri).